The sequence spans 962 residues: Insulin-degrading enzyme homolog (962 aa).

Residues 1-10 (MVANEQQQQQ) show a composition bias toward low complexity. The disordered stretch occupies residues 1–21 (MVANEQQQQQQEEERKEVKLI). Position 74 (His74) interacts with Zn(2+). The active-site Proton acceptor is Glu77. Zn(2+) contacts are provided by His78 and Glu155.

It belongs to the peptidase M16 family. In terms of assembly, homodimer. The cofactor is Zn(2+).

The protein localises to the cytoplasm. The polypeptide is Insulin-degrading enzyme homolog (Dictyostelium discoideum (Social amoeba)).